A 188-amino-acid polypeptide reads, in one-letter code: Acireductone dioxygenase (188 aa).

Positions 1-20 (MSRLRIFADSNPTTPHFDSR) are disordered. Histidine 97, histidine 99, glutamate 103, and histidine 141 together coordinate Fe(2+). 4 residues coordinate Ni(2+): histidine 97, histidine 99, glutamate 103, and histidine 141.

This sequence belongs to the acireductone dioxygenase (ARD) family. As to quaternary structure, monomer. Requires Fe(2+) as cofactor. It depends on Ni(2+) as a cofactor.

It carries out the reaction 1,2-dihydroxy-5-(methylsulfanyl)pent-1-en-3-one + O2 = 3-(methylsulfanyl)propanoate + CO + formate + 2 H(+). The enzyme catalyses 1,2-dihydroxy-5-(methylsulfanyl)pent-1-en-3-one + O2 = 4-methylsulfanyl-2-oxobutanoate + formate + 2 H(+). It functions in the pathway amino-acid biosynthesis; L-methionine biosynthesis via salvage pathway; L-methionine from S-methyl-5-thio-alpha-D-ribose 1-phosphate: step 5/6. Catalyzes 2 different reactions between oxygen and the acireductone 1,2-dihydroxy-3-keto-5-methylthiopentene (DHK-MTPene) depending upon the metal bound in the active site. Fe-containing acireductone dioxygenase (Fe-ARD) produces formate and 2-keto-4-methylthiobutyrate (KMTB), the alpha-ketoacid precursor of methionine in the methionine recycle pathway. Ni-containing acireductone dioxygenase (Ni-ARD) produces methylthiopropionate, carbon monoxide and formate, and does not lie on the methionine recycle pathway. This is Acireductone dioxygenase from Xanthomonas campestris pv. campestris (strain 8004).